Here is a 523-residue protein sequence, read N- to C-terminus: MLDKLSKHKTMFYERVKEIDQILFSQQQAKQTQLDNLSNNNASGGFFSGFMKMFSPLSTPPNSSSNNNSNTQQAISQETRKLCSVNNNRHEPIYNQYTTNSQVIRSFPAVSSIGQSSTNMYNSVNICDGISSSEKRSPTPPRNRSNSNDKILFGHYDALGSLPQNNMGHYQQPPQQSSQQQQQPLVPKQNSVTALRNTTSATSSTTTANNKKPSLDQIPELKGVDRKLLDHILNEVIETKTTNWDDIAGLKDAKQTLLETVILPSIRPDLFNGLRAPCRGILLFGPPGTGKTMIARACASQCNATFFSISAGSLVSKYHGEGEKLVRCLFAAARYLQPSVIFIDEIDSILSARSSEEHEASRRMKTEFMIQMDGVSNMNGKEDRVLVMGATNIPTELDEAILRRFTKRIYIPLPDHAARASLIKQLSHGQNMSLSETDINKICVATEGFSGSDLTALCKETSMVPLREISMDQLISIDARKIRPIVLKDFQSSLVHVRPSTSQDTIKKLEKWNESYGTFAKGI.

At 1–41 (MLDKLSKHKTMFYERVKEIDQILFSQQQAKQTQLDNLSNNN) the chain is on the cytoplasmic side. Residues 42-58 (ASGGFFSGFMKMFSPLS) constitute an intramembrane region (helical). Composition is skewed to low complexity over residues 57–71 (LSTPPNSSSNNNSNT), 171–184 (QQPPQQSSQQQQQP), and 193–210 (TALRNTTSATSSTTTANN). 2 disordered regions span residues 57–77 (LSTPPNSSSNNNSNTQQAISQ) and 129–218 (GISS…LDQI). Residues 59–523 (TPPNSSSNNN…ESYGTFAKGI (465 aa)) are Cytoplasmic-facing.

Belongs to the AAA ATPase family. Spastin subfamily. In terms of assembly, homohexamer. The homohexamer is stabilized by ATP-binding. The homohexamer may adopt a ring conformation through which microtubules pass prior to being severed.

Its subcellular location is the membrane. The catalysed reaction is n ATP + n H2O + a microtubule = n ADP + n phosphate + (n+1) alpha/beta tubulin heterodimers.. ATP-dependent microtubule severing protein. Stimulates microtubule minus-end depolymerization and poleward microtubule flux in the mitotic spindle. This Naegleria gruberi (Amoeba) protein is Spastin.